We begin with the raw amino-acid sequence, 330 residues long: SUMO-activating enzyme subunit 1 (330 aa).

It belongs to the ubiquitin-activating E1 family. As to quaternary structure, heterodimer of sae1 and sae2. The complex binds sumo via sae2.

The protein localises to the nucleus. It participates in protein modification; protein sumoylation. Its function is as follows. The dimeric enzyme acts as an E1 ligase for sumo. It mediates ATP-dependent activation of sumo and formation of a thioester with a conserved cysteine residue on sae2. In Dictyostelium discoideum (Social amoeba), this protein is SUMO-activating enzyme subunit 1 (sae1).